The chain runs to 283 residues: Gap junction beta-1 protein (283 aa).

Residues 1-22 (MNWTGLYTLLSGVNRHSTAIGR) are Cytoplasmic-facing. Residues 23–45 (VWLSVIFIFRIMVLVVAAESVWG) traverse the membrane as a helical segment. The Extracellular segment spans residues 46–75 (DEKSSFICNTLQPGCNSVCYDHFFPISHVR). The helical transmembrane segment at 76–95 (LWSLQLILVSTPALLVAMHV) threads the bilayer. The Cytoplasmic portion of the chain corresponds to 96 to 130 (AHQQHIEKKMLRLEGHGDPIHLEEVKRHKVHISGT). A helical transmembrane segment spans residues 131–153 (LWWTYVISVVFRLLFEAAFMYVF). At 154–191 (YLLYPGYAMVRLVKCDAYPCPNTVDCFVSRPTEKTVFT) the chain is on the extracellular side. Residues 192–214 (VFMLAASGICIILNVAEVVYLIV) traverse the membrane as a helical segment. The Cytoplasmic portion of the chain corresponds to 215–283 (RACARRAQRR…AEKSDRCSAC (69 aa)). Residues serine 233, serine 258, serine 266, and serine 277 each carry the phosphoserine modification.

Belongs to the connexin family. Beta-type (group I) subfamily. A connexon is composed of a hexamer of connexins. Interacts with CNST.

It localises to the cell membrane. Its subcellular location is the cell junction. It is found in the gap junction. In terms of biological role, one gap junction consists of a cluster of closely packed pairs of transmembrane channels, the connexons, through which materials of low MW diffuse from one cell to a neighboring cell. The protein is Gap junction beta-1 protein (GJB1) of Equus caballus (Horse).